The chain runs to 613 residues: Transcription factor cbf11 (613 aa).

The interval 32–58 is disordered; sequence NNGLHNQEDGAGGRNENSERVGSGSPG.

The protein belongs to the Su(H) family.

The protein resides in the cytoplasm. The protein localises to the nucleus. In terms of biological role, transcription factor that behaves as a negative regulator of adhesion. Recognizes specifically the canonical CSL response element GTGA/GGAA. May also play a cbf12-antagonistic role in the regulation of a number of other important processes such as extracellular material production, colony morphogenesis, ploidy maintenance, or meiosis. The polypeptide is Transcription factor cbf11 (cbf11) (Schizosaccharomyces pombe (strain 972 / ATCC 24843) (Fission yeast)).